We begin with the raw amino-acid sequence, 171 residues long: Peptidyl-prolyl cis-trans isomerase slr1251 (171 aa).

In terms of domain architecture, PPIase cyclophilin-type spans Phe-6–Glu-169.

It belongs to the cyclophilin-type PPIase family.

The catalysed reaction is [protein]-peptidylproline (omega=180) = [protein]-peptidylproline (omega=0). In terms of biological role, PPIases accelerate the folding of proteins. It catalyzes the cis-trans isomerization of proline imidic peptide bonds in oligopeptides. In Synechocystis sp. (strain ATCC 27184 / PCC 6803 / Kazusa), this protein is Peptidyl-prolyl cis-trans isomerase slr1251.